Consider the following 592-residue polypeptide: NADH-quinone oxidoreductase subunit C/D (592 aa).

The NADH dehydrogenase I subunit C stretch occupies residues 1–183; the sequence is MSAAQSPTAQ…DPYTLTVEGQ (183 aa). Positions 207–592 are NADH dehydrogenase I subunit D; that stretch reads DYMFLNLGPN…IDFVMADVDR (386 aa).

The protein in the N-terminal section; belongs to the complex I 30 kDa subunit family. This sequence in the C-terminal section; belongs to the complex I 49 kDa subunit family. In terms of assembly, NDH-1 is composed of 13 different subunits. Subunits NuoB, CD, E, F, and G constitute the peripheral sector of the complex.

It localises to the cell inner membrane. It carries out the reaction a quinone + NADH + 5 H(+)(in) = a quinol + NAD(+) + 4 H(+)(out). Functionally, NDH-1 shuttles electrons from NADH, via FMN and iron-sulfur (Fe-S) centers, to quinones in the respiratory chain. The immediate electron acceptor for the enzyme in this species is believed to be ubiquinone. Couples the redox reaction to proton translocation (for every two electrons transferred, four hydrogen ions are translocated across the cytoplasmic membrane), and thus conserves the redox energy in a proton gradient. The chain is NADH-quinone oxidoreductase subunit C/D from Chromohalobacter salexigens (strain ATCC BAA-138 / DSM 3043 / CIP 106854 / NCIMB 13768 / 1H11).